Consider the following 412-residue polypeptide: Adherens junction-associated protein 1 (412 aa).

The N-terminal stretch at 1-43 (MWIQQLLGLSSMSIRWPGRSLGSHAWILIAMLQLAVDFPSCDS) is a signal peptide. Topologically, residues 44-284 (LGPGPEFRLL…GETSGLAVHQ (241 aa)) are extracellular. Disordered stretches follow at residues 62–175 (LWSL…GRPT) and 243–271 (DPWK…IQPP). The segment covering 121-146 (PPAATRSSPSLASATASSSIVTAGAA) has biased composition (low complexity). Residues 160 to 171 (HDTEFNDFDFRG) are compositionally biased toward basic and acidic residues. A compositionally biased stretch (low complexity) spans 248-263 (TPVGVSTTEPSTSPSS). Residues 285–305 (IITITVSLIMVIAALITTLVL) traverse the membrane as a helical segment. Residues 305-412 (LKNCCAPSGH…VSEKWFEISC (108 aa)) form a targeting signals region. Topologically, residues 306-412 (KNCCAPSGHT…VSEKWFEISC (107 aa)) are cytoplasmic.

As to quaternary structure, forms a complex with CDH1 and CTNNB1; interacts directly with CTNNB1. Interacts with AP1M2 and isoform 2 of BSG/CD147.

It is found in the basolateral cell membrane. Its subcellular location is the apical cell membrane. The protein resides in the cell junction. The protein localises to the adherens junction. Plays a role in cell adhesion and cell migration. In Mus musculus (Mouse), this protein is Adherens junction-associated protein 1 (Ajap1).